A 502-amino-acid chain; its full sequence is Cyclin-dependent kinase 19 (502 aa).

An N-acetylmethionine modification is found at methionine 1. The 315-residue stretch at glutamate 21–phenylalanine 335 folds into the Protein kinase domain. Residues valine 27–valine 35 and lysine 52 contribute to the ATP site. Aspartate 151 acts as the Proton acceptor in catalysis. A disordered region spans residues leucine 359–tyrosine 502. Residues asparagine 371–proline 392 are compositionally biased toward low complexity. Positions threonine 408–alanine 421 are enriched in gly residues. Polar residues predominate over residues glutamine 424 to proline 435. Serine 449 bears the Phosphoserine mark. Polar residues predominate over residues tyrosine 458–tyrosine 467. A compositionally biased stretch (low complexity) spans glutamine 468–serine 496.

It belongs to the protein kinase superfamily. CMGC Ser/Thr protein kinase family. CDC2/CDKX subfamily.

The protein localises to the cytoplasm. The protein resides in the perinuclear region. It localises to the nucleus. It carries out the reaction L-seryl-[protein] + ATP = O-phospho-L-seryl-[protein] + ADP + H(+). It catalyses the reaction L-threonyl-[protein] + ATP = O-phospho-L-threonyl-[protein] + ADP + H(+). The sequence is that of Cyclin-dependent kinase 19 (CDK19) from Homo sapiens (Human).